Here is a 726-residue protein sequence, read N- to C-terminus: Pre-mRNA-splicing factor CLF1 (726 aa).

HAT repeat units lie at residues 55 to 87, 89 to 121, 123 to 155, 157 to 188, 190 to 221, 223 to 262, 264 to 298, 308 to 340, 352 to 386, 396 to 432, 434 to 465, 467 to 499, 501 to 534, 536 to 567, 585 to 626, and 635 to 667; these read EFQA…WEAS, NEYE…MELK, RNIN…LEEL, LNVS…LEER, NELD…FEED, GQPD…METR, KEFE…FEKQ, TVLG…LEED, VEPM…LWLQ, KDYD…FEIR, LDVS…LEMR, REFD…VESA, EDFE…FEAG, GERE…MEIA, GDAD…EHGD, and DMLP…DDER. A disordered region spans residues 682–726; that stretch reads AWAQQRAGQGEEGGLSYDLPSDSEDENEDGDEDGDGREEEGMDQD. Acidic residues predominate over residues 702–726; sequence SDSEDENEDGDEDGDGREEEGMDQD.

The protein belongs to the crooked-neck family. In terms of assembly, associated with the spliceosome.

It is found in the nucleus. Its function is as follows. Involved in pre-mRNA splicing and cell cycle progression. Required for the spliceosome assembly and initiation of the DNA replication. The polypeptide is Pre-mRNA-splicing factor CLF1 (CLF1) (Cryptococcus neoformans var. neoformans serotype D (strain B-3501A) (Filobasidiella neoformans)).